Reading from the N-terminus, the 416-residue chain is Multifunctional CCA protein (416 aa).

ATP contacts are provided by glycine 8 and arginine 11. CTP is bound by residues glycine 8 and arginine 11. Aspartate 21 and aspartate 23 together coordinate Mg(2+). ATP contacts are provided by arginine 91, arginine 137, and arginine 140. Arginine 91, arginine 137, and arginine 140 together coordinate CTP. The 102-residue stretch at 228-329 folds into the HD domain; the sequence is TGLHTMMVLA…IKLFDKADFW (102 aa).

It belongs to the tRNA nucleotidyltransferase/poly(A) polymerase family. Bacterial CCA-adding enzyme type 1 subfamily. Monomer. Can also form homodimers and oligomers. It depends on Mg(2+) as a cofactor. Requires Ni(2+) as cofactor.

The enzyme catalyses a tRNA precursor + 2 CTP + ATP = a tRNA with a 3' CCA end + 3 diphosphate. It catalyses the reaction a tRNA with a 3' CCA end + 2 CTP + ATP = a tRNA with a 3' CCACCA end + 3 diphosphate. Catalyzes the addition and repair of the essential 3'-terminal CCA sequence in tRNAs without using a nucleic acid template. Adds these three nucleotides in the order of C, C, and A to the tRNA nucleotide-73, using CTP and ATP as substrates and producing inorganic pyrophosphate. tRNA 3'-terminal CCA addition is required both for tRNA processing and repair. Also involved in tRNA surveillance by mediating tandem CCA addition to generate a CCACCA at the 3' terminus of unstable tRNAs. While stable tRNAs receive only 3'-terminal CCA, unstable tRNAs are marked with CCACCA and rapidly degraded. This is Multifunctional CCA protein from Shewanella sp. (strain MR-4).